The chain runs to 274 residues: Tyrosinase (274 aa).

H38, H54, H63, H190, H194, and H216 together coordinate Cu cation.

Belongs to the tyrosinase family. The cofactor is Cu(2+).

It carries out the reaction 2 L-dopa + O2 = 2 L-dopaquinone + 2 H2O. It catalyses the reaction L-tyrosine + O2 = L-dopaquinone + H2O. Its function is as follows. This is a copper-containing oxidase that functions in the formation of pigments such as melanins and other polyphenolic compounds. The sequence is that of Tyrosinase (melC2) from Streptomyces glaucescens.